We begin with the raw amino-acid sequence, 47 residues long: Putative glycosylation-dependent cell adhesion molecule 1 (47 aa).

An N-terminal signal peptide occupies residues 1–18 (MKFFMVLLPASLASTSLA).

It belongs to the PP3/GlyCAM-1 family. Expressed in cells harvested from milk of lactating women. Not found in other tissues.

The chain is Putative glycosylation-dependent cell adhesion molecule 1 (GLYCAM1) from Homo sapiens (Human).